The sequence spans 103 residues: Small ribosomal subunit protein uS10c (103 aa).

Belongs to the universal ribosomal protein uS10 family. In terms of assembly, part of the 30S ribosomal subunit.

It is found in the plastid. The protein resides in the chloroplast. Functionally, involved in the binding of tRNA to the ribosomes. In Trieres chinensis (Marine centric diatom), this protein is Small ribosomal subunit protein uS10c.